The primary structure comprises 254 residues: 3-deoxy-manno-octulosonate cytidylyltransferase (254 aa).

Belongs to the KdsB family.

It localises to the cytoplasm. It carries out the reaction 3-deoxy-alpha-D-manno-oct-2-ulosonate + CTP = CMP-3-deoxy-beta-D-manno-octulosonate + diphosphate. It functions in the pathway nucleotide-sugar biosynthesis; CMP-3-deoxy-D-manno-octulosonate biosynthesis; CMP-3-deoxy-D-manno-octulosonate from 3-deoxy-D-manno-octulosonate and CTP: step 1/1. Its pathway is bacterial outer membrane biogenesis; lipopolysaccharide biosynthesis. In terms of biological role, activates KDO (a required 8-carbon sugar) for incorporation into bacterial lipopolysaccharide in Gram-negative bacteria. The sequence is that of 3-deoxy-manno-octulosonate cytidylyltransferase from Polynucleobacter necessarius subsp. necessarius (strain STIR1).